The primary structure comprises 222 residues: Interleukin-12 subunit alpha (222 aa).

A signal peptide spans 1–25 (MCPPRGLLLVTILVLLSHLDHLTWA). Cystine bridges form between Cys40–Cys113, Cys67–Cys199, and Cys88–Cys126. N-linked (GlcNAc...) asparagine glycans are attached at residues Asn42, Asn96, and Asn110.

It belongs to the IL-6 superfamily. In terms of assembly, heterodimer with IL12B; disulfide-linked. This heterodimer is known as interleukin IL-12. Heterodimer with EBI3/IL27B; not disulfide-linked. This heterodimer is known as interleukin IL-35. Interacts with NBR1; this interaction promotes IL-12 secretion.

The protein localises to the secreted. Its function is as follows. Heterodimerizes with IL12B to form the IL-12 cytokine or with EBI3/IL27B to form the IL-35 cytokine. IL-12 is primarily produced by professional antigen-presenting cells (APCs) such as B-cells and dendritic cells (DCs) as well as macrophages and granulocytes and regulates T-cell and natural killer-cell responses, induces the production of interferon-gamma (IFN-gamma), favors the differentiation of T-helper 1 (Th1) cells and is an important link between innate resistance and adaptive immunity. Mechanistically, exerts its biological effects through a receptor composed of IL12R1 and IL12R2 subunits. Binding to the receptor results in the rapid tyrosine phosphorylation of a number of cellular substrates including the JAK family kinases TYK2 and JAK2. In turn, recruited STAT4 gets phosphorylated and translocates to the nucleus where it regulates cytokine/growth factor responsive genes. As part of IL-35, plays essential roles in maintaining the immune homeostasis of the liver microenvironment and also functions as an immune-suppressive cytokine. Mediates biological events through unconventional receptors composed of IL12RB2 and gp130/IL6ST heterodimers or homodimers. Signaling requires the transcription factors STAT1 and STAT4, which form a unique heterodimer that binds to distinct DNA sites. The sequence is that of Interleukin-12 subunit alpha (IL12A) from Canis lupus familiaris (Dog).